We begin with the raw amino-acid sequence, 110 residues long: T cell receptor alpha variable 22 (110 aa).

The first 21 residues, 1 to 21 (MKRILGALLGLLSAQVCCVRG), serve as a signal peptide directing secretion. In terms of domain architecture, Ig-like spans 22–110 (IQVEQSPPDL…DSGVYFCAVE (89 aa)). 2 N-linked (GlcNAc...) asparagine glycosylation sites follow: Asn38 and Asn44. A disulfide bridge connects residues Cys43 and Cys107.

In terms of assembly, alpha-beta TR is a heterodimer composed of an alpha and beta chain; disulfide-linked. The alpha-beta TR is associated with the transmembrane signaling CD3 coreceptor proteins to form the TR-CD3 (TcR or TCR). The assembly of alpha-beta TR heterodimers with CD3 occurs in the endoplasmic reticulum where a single alpha-beta TR heterodimer associates with one CD3D-CD3E heterodimer, one CD3G-CD3E heterodimer and one CD247 homodimer forming a stable octameric structure. CD3D-CD3E and CD3G-CD3E heterodimers preferentially associate with TR alpha and TR beta chains, respectively. The association of the CD247 homodimer is the last step of TcR assembly in the endoplasmic reticulum and is required for transport to the cell surface.

Its subcellular location is the cell membrane. In terms of biological role, v region of the variable domain of T cell receptor (TR) alpha chain that participates in the antigen recognition. Alpha-beta T cell receptors are antigen specific receptors which are essential to the immune response and are present on the cell surface of T lymphocytes. Recognize peptide-major histocompatibility (MH) (pMH) complexes that are displayed by antigen presenting cells (APC), a prerequisite for efficient T cell adaptive immunity against pathogens. Binding of alpha-beta TR to pMH complex initiates TR-CD3 clustering on the cell surface and intracellular activation of LCK that phosphorylates the ITAM motifs of CD3G, CD3D, CD3E and CD247 enabling the recruitment of ZAP70. In turn ZAP70 phosphorylates LAT, which recruits numerous signaling molecules to form the LAT signalosome. The LAT signalosome propagates signal branching to three major signaling pathways, the calcium, the mitogen-activated protein kinase (MAPK) kinase and the nuclear factor NF-kappa-B (NF-kB) pathways, leading to the mobilization of transcription factors that are critical for gene expression and essential for T cell growth and differentiation. The T cell repertoire is generated in the thymus, by V-(D)-J rearrangement. This repertoire is then shaped by intrathymic selection events to generate a peripheral T cell pool of self-MH restricted, non-autoaggressive T cells. Post-thymic interaction of alpha-beta TR with the pMH complexes shapes TR structural and functional avidity. This is T cell receptor alpha variable 22 from Homo sapiens (Human).